The following is a 154-amino-acid chain: Superoxide dismutase [Cu-Zn] 1 (154 aa).

The Cu cation site is built by His47, His49, and His64. A disulfide bridge connects residues Cys58 and Cys147. The Zn(2+) site is built by His64, His72, His81, and Asp84. His121 serves as a coordination point for Cu cation. A substrate-binding site is contributed by Arg144.

Belongs to the Cu-Zn superoxide dismutase family. As to quaternary structure, homodimer. Cu cation serves as cofactor. Zn(2+) is required as a cofactor.

It is found in the cytoplasm. The catalysed reaction is 2 superoxide + 2 H(+) = H2O2 + O2. In terms of biological role, destroys radicals which are normally produced within the cells and which are toxic to biological systems. The protein is Superoxide dismutase [Cu-Zn] 1 (SOD1) of Debaryomyces hansenii (strain ATCC 36239 / CBS 767 / BCRC 21394 / JCM 1990 / NBRC 0083 / IGC 2968) (Yeast).